The chain runs to 419 residues: Serine/threonine-protein kinase Kist (419 aa).

One can recognise a Protein kinase domain in the interval 23-304 (WQVQSRLGSG…AEMALCSPFF (282 aa)). Residues 29–37 (LGSGSSASV) and lysine 54 contribute to the ATP site. Catalysis depends on proton acceptor residues aspartate 141 and aspartate 158. Positions 324-406 (RLLNVLDDDY…KFVVATFYPL (83 aa)) constitute an RRM domain.

This sequence belongs to the protein kinase superfamily. Ser/Thr protein kinase family. As to quaternary structure, interacts with stathmin and CDKN1B/p27Kip1 Interacts with PAM. In the embryo, preferentially expressed in the developing nervous system.

The protein localises to the cytoplasm. It localises to the nucleus. The enzyme catalyses L-seryl-[protein] + ATP = O-phospho-L-seryl-[protein] + ADP + H(+). It catalyses the reaction L-threonyl-[protein] + ATP = O-phospho-L-threonyl-[protein] + ADP + H(+). In terms of biological role, upon serum stimulation, phosphorylates CDKN1B/p27Kip1, thus controlling CDKN1B subcellular location and cell cycle progression in G1 phase. May be involved in trafficking and/or processing of RNA. This chain is Serine/threonine-protein kinase Kist (Uhmk1), found in Rattus norvegicus (Rat).